Here is a 410-residue protein sequence, read N- to C-terminus: O-methyltransferase afvC (410 aa).

Residues 253 to 254 (GG), Asp-278, 299 to 300 (DF), and Arg-315 contribute to the S-adenosyl-L-methionine site. Residue His-319 is the Proton acceptor of the active site.

Belongs to the class I-like SAM-binding methyltransferase superfamily. Cation-independent O-methyltransferase family. COMT subfamily.

It participates in secondary metabolite biosynthesis. In terms of biological role, O-methyltransferase; part of the gene cluster that mediates the biosynthesis of aflavarin, a bicoumarin that exhibits anti-insectan activity against the fungivorous beetle C.hemipterus. The protein is O-methyltransferase afvC of Aspergillus flavus (strain ATCC 200026 / FGSC A1120 / IAM 13836 / NRRL 3357 / JCM 12722 / SRRC 167).